The following is a 129-amino-acid chain: Phosphoribosyl-AMP cyclohydrolase (129 aa).

Asp-85 provides a ligand contact to Mg(2+). A Zn(2+)-binding site is contributed by Cys-86. 2 residues coordinate Mg(2+): Asp-87 and Asp-89. Zn(2+)-binding residues include Cys-102 and Cys-109.

It belongs to the PRA-CH family. Homodimer. Mg(2+) serves as cofactor. Zn(2+) is required as a cofactor.

The protein localises to the cytoplasm. It catalyses the reaction 1-(5-phospho-beta-D-ribosyl)-5'-AMP + H2O = 1-(5-phospho-beta-D-ribosyl)-5-[(5-phospho-beta-D-ribosylamino)methylideneamino]imidazole-4-carboxamide. The protein operates within amino-acid biosynthesis; L-histidine biosynthesis; L-histidine from 5-phospho-alpha-D-ribose 1-diphosphate: step 3/9. Functionally, catalyzes the hydrolysis of the adenine ring of phosphoribosyl-AMP. This is Phosphoribosyl-AMP cyclohydrolase from Methanococcus maripaludis (strain C5 / ATCC BAA-1333).